Reading from the N-terminus, the 278-residue chain is Undecaprenyl-diphosphatase 1 (278 aa).

A run of 5 helical transmembrane segments spans residues 85 to 105 (LNVIIATIPAIVLGLLFEKTI), 108 to 128 (ALFSPVPVAFALVAGGVVILW), 188 to 208 (VATEFSFFLAIPIIFGATAYE), 218 to 238 (VDALGTFALGFVAAFVSAFAC), and 254 to 274 (FAWYRIGFGLLILLVGYSGAL).

The protein belongs to the UppP family.

It localises to the cell inner membrane. It carries out the reaction di-trans,octa-cis-undecaprenyl diphosphate + H2O = di-trans,octa-cis-undecaprenyl phosphate + phosphate + H(+). In terms of biological role, catalyzes the dephosphorylation of undecaprenyl diphosphate (UPP). Confers resistance to bacitracin. In Paraburkholderia xenovorans (strain LB400), this protein is Undecaprenyl-diphosphatase 1.